A 57-amino-acid chain; its full sequence is UPF0509 protein YciZ (57 aa).

Belongs to the UPF0509 family.

This is UPF0509 protein YciZ (yciZ) from Shigella flexneri.